The primary structure comprises 37 residues: Large ribosomal subunit protein bL36c (37 aa).

It belongs to the bacterial ribosomal protein bL36 family.

It is found in the plastid. The protein resides in the chloroplast. This chain is Large ribosomal subunit protein bL36c (rpl36), found in Chlorella vulgaris (Green alga).